A 378-amino-acid chain; its full sequence is MARDYYGILGVDRNATDSEIKKAYRKLARKYHPDVNPSEEAAEKFREASVAHEVLTDPDKRRIVDMGGDPMEQGGGAGHPGGFGSGGLGDIFDAFFGGGAGSRGPRSRVQPGSDTLWRTSITLEEAFTGVKKDLTLDTAVLCSKCHGSGSASNAKPKTCGTCHGSGEIQEVQRSFLGNVMTSRPCHTCNGTGEVIPDPCDECAGDGRVRARRDIVADIPAGIQSGMRIRMAGQGEVGAGGGPAGDLYVEVMVRPHAVFTRDGDDLHASIRVPMIDAALGSELEVESLTGEEITVVIPAGTQPNQVITLEGEGMPRLRAEGRGDLMAHVDLFVPTEIDDRTRELLEQIRDYRRDNSSVHREGEEHGGLFDKLKSKFRNR.

The J domain maps to 4–68 (DYYGILGVDR…DKRRIVDMGG (65 aa)). The CR-type zinc-finger motif lies at 129–211 (GVKKDLTLDT…CAGDGRVRAR (83 aa)). Cys-142, Cys-145, Cys-159, Cys-162, Cys-185, Cys-188, Cys-199, and Cys-202 together coordinate Zn(2+). CXXCXGXG motif repeat units follow at residues 142–149 (CSKCHGSG), 159–166 (CGTCHGSG), 185–192 (CHTCNGTG), and 199–206 (CDECAGDG).

Belongs to the DnaJ family. As to quaternary structure, homodimer. Zn(2+) is required as a cofactor.

The protein resides in the cytoplasm. Participates actively in the response to hyperosmotic and heat shock by preventing the aggregation of stress-denatured proteins and by disaggregating proteins, also in an autonomous, DnaK-independent fashion. Unfolded proteins bind initially to DnaJ; upon interaction with the DnaJ-bound protein, DnaK hydrolyzes its bound ATP, resulting in the formation of a stable complex. GrpE releases ADP from DnaK; ATP binding to DnaK triggers the release of the substrate protein, thus completing the reaction cycle. Several rounds of ATP-dependent interactions between DnaJ, DnaK and GrpE are required for fully efficient folding. Also involved, together with DnaK and GrpE, in the DNA replication of plasmids through activation of initiation proteins. The polypeptide is Chaperone protein DnaJ 1 (Corynebacterium efficiens (strain DSM 44549 / YS-314 / AJ 12310 / JCM 11189 / NBRC 100395)).